The following is a 259-amino-acid chain: Tubulin-specific chaperone C (259 aa).

The C-CAP/cofactor C-like domain occupies 112–241; that stretch reads PEVYFENDTL…DEHPILDFTW (130 aa).

This sequence belongs to the TBCC family.

The protein localises to the cytoplasm. It localises to the cytoskeleton. In terms of biological role, tubulin-folding protein; involved in the final step of the tubulin folding pathway. This Schizosaccharomyces pombe (strain 972 / ATCC 24843) (Fission yeast) protein is Tubulin-specific chaperone C (cin2).